A 473-amino-acid chain; its full sequence is 3-isopropylmalate dehydratase large subunit (473 aa).

Residues cysteine 351, cysteine 414, and cysteine 417 each contribute to the [4Fe-4S] cluster site.

Belongs to the aconitase/IPM isomerase family. LeuC type 1 subfamily. Heterodimer of LeuC and LeuD. The cofactor is [4Fe-4S] cluster.

It catalyses the reaction (2R,3S)-3-isopropylmalate = (2S)-2-isopropylmalate. Its pathway is amino-acid biosynthesis; L-leucine biosynthesis; L-leucine from 3-methyl-2-oxobutanoate: step 2/4. Catalyzes the isomerization between 2-isopropylmalate and 3-isopropylmalate, via the formation of 2-isopropylmaleate. This Variovorax paradoxus (strain S110) protein is 3-isopropylmalate dehydratase large subunit.